An 805-amino-acid polypeptide reads, in one-letter code: Sucrose synthase (805 aa).

Positions 275–752 are GT-B glycosyltransferase; it reads MVFNVVILSP…GLKRIQEKYT (478 aa).

The protein belongs to the glycosyltransferase 1 family. Plant sucrose synthase subfamily.

It carries out the reaction an NDP-alpha-D-glucose + D-fructose = a ribonucleoside 5'-diphosphate + sucrose + H(+). Its function is as follows. Sucrose-cleaving enzyme that provides UDP-glucose and fructose for various metabolic pathways. This Solanum tuberosum (Potato) protein is Sucrose synthase.